Here is a 638-residue protein sequence, read N- to C-terminus: ATP-dependent zinc metalloprotease FtsH (638 aa).

The Cytoplasmic portion of the chain corresponds to 1–11; that stretch reads MSQKGKNKKWR. The helical transmembrane segment at 12-32 threads the bilayer; it reads SAGLYALLAIVLISLATTFLG. The Lumenal portion of the chain corresponds to 33 to 114; it reads NRPPERLEIS…LAVRPVQEEG (82 aa). A helical membrane pass occupies residues 115 to 135; the sequence is LLGRILSTFFLPVLLLLGLFF. The Cytoplasmic segment spans residues 136-638; it reads LLRRAQNGPG…TLPMAVNAGA (503 aa). ATP is bound at residue 209–216; it reads GPPGTGKT. His-431 provides a ligand contact to Zn(2+). The active site involves Glu-432. Zn(2+)-binding residues include His-435 and Asp-510.

This sequence in the central section; belongs to the AAA ATPase family. The protein in the C-terminal section; belongs to the peptidase M41 family. Homohexamer. The cofactor is Zn(2+).

The protein localises to the cellular thylakoid membrane. Functionally, acts as a processive, ATP-dependent zinc metallopeptidase for both cytoplasmic and membrane proteins. Plays a role in the quality control of integral membrane proteins. The polypeptide is ATP-dependent zinc metalloprotease FtsH (Synechococcus sp. (strain JA-2-3B'a(2-13)) (Cyanobacteria bacterium Yellowstone B-Prime)).